We begin with the raw amino-acid sequence, 334 residues long: MKKNQFLKESDVTAESVFFMKRRQVLKALGISAAAFSLPHAAHADLLSWFKGNDRPPAPAGKPLEFSKPAAWQNNLPLTPADKVSGYNNFYEFGLDKADPAANAGSLKTDPWTLKISGEVAKPLTLDHDDLTRRFPLEERIYRMRCVEAWSMVVPWIGFPLHKLLALAEPTSNAKYVAFETIYAPEQMPGQQDRFIGGGLKYPYVEGLRLDEAMHPLTLMTVGVYGKALPPQNGAPVRLIVPWKYGFKGIKSIVSIKLTRERPPTTWNLVAPDEYGFYANVNPHVDHPRWSQATERFIGSGGILDVQRQPTLLFNGYADQVASLYRGLDLRENF.

Residues 1–44 (MKKNQFLKESDVTAESVFFMKRRQVLKALGISAAAFSLPHAAHA) constitute a signal peptide (tat-type signal). Mo-molybdopterin-binding positions include Asn88, 91 to 92 (YE), Cys146, Thr181, Asn233, Arg238, and 249 to 251 (GIK).

Belongs to the MsrP family. Heterodimer of a catalytic subunit (MsrP) and a heme-binding subunit (MsrQ). Requires Mo-molybdopterin as cofactor. In terms of processing, predicted to be exported by the Tat system. The position of the signal peptide cleavage has not been experimentally proven.

It localises to the periplasm. The catalysed reaction is L-methionyl-[protein] + a quinone + H2O = L-methionyl-(S)-S-oxide-[protein] + a quinol. The enzyme catalyses L-methionyl-[protein] + a quinone + H2O = L-methionyl-(R)-S-oxide-[protein] + a quinol. In terms of biological role, part of the MsrPQ system that repairs oxidized periplasmic proteins containing methionine sulfoxide residues (Met-O), using respiratory chain electrons. Thus protects these proteins from oxidative-stress damage caused by reactive species of oxygen and chlorine generated by the host defense mechanisms. MsrPQ is essential for the maintenance of envelope integrity under bleach stress, rescuing a wide series of structurally unrelated periplasmic proteins from methionine oxidation, including the primary periplasmic chaperone SurA and the lipoprotein Pal. The catalytic subunit MsrP is non-stereospecific, being able to reduce both (R-) and (S-) diastereoisomers of methionine sulfoxide. This is Protein-methionine-sulfoxide reductase catalytic subunit MsrP from Escherichia coli O6:H1 (strain CFT073 / ATCC 700928 / UPEC).